A 704-amino-acid chain; its full sequence is MNASNLLVELFVEELPPKALQKLGDAFAGVLFEQLKAQGLLASSEARLTAYASPRRLAAHITEVLPQAEDKAVSQKLMPVSVGLDADGKPTPALIKKLAALGAGEEAVAGLTRQGEGKAEALFHSSTVRGVMLADGVQKALDEAIAKLPIPKVMRYQLADGWSSVHFVRPAHGLVVLHGTEVLIGVKALGLTAGTATHGHRFEAAVDPVVIRSADDYAAQLREEGAVIASFAERRAEIARQLQAAAERLGGGVRPIEDEALLDEVTALVERPNVLVCEFEKEFLDVPQECLILTMKANQKYFPLLDAAGKLTHQFLVVSNISPQDASAVIGGNERVVRPRLADAKFFFDQDRKKTLASRVEGLGKVVYHNKLGTQGERVERVRSIAKSIARQLGDTGLAQQADLAAQLAKTDLVTDMVGEFPELQGTMGRYYALNDGLDVAVADAIEDHYKPRFAGDELPRGNAGVVVALADKLETLVGMFGIGNLPTGDRDPFALRRHALGVIRMLVEKDLALDLETLLVSVLPAFGDKIEDATPQLADFIYDRLAGNLREQGFSAQEVDSVLALRPQRLSDVQKRLEAVRAFGELPEAPALAAANKRVGNILKKADQAVQAQVDAAVLAEVAEKDLYAALQSVAPKAQQQFAAGDYTASLQTLAALRAPVDAFFEHVMVNAEDPALKANRLGLLATLHEAMNRVADLSRLAA.

Belongs to the class-II aminoacyl-tRNA synthetase family. As to quaternary structure, tetramer of two alpha and two beta subunits.

It localises to the cytoplasm. The enzyme catalyses tRNA(Gly) + glycine + ATP = glycyl-tRNA(Gly) + AMP + diphosphate. The polypeptide is Glycine--tRNA ligase beta subunit (Delftia acidovorans (strain DSM 14801 / SPH-1)).